Reading from the N-terminus, the 1136-residue chain is Unconventional myosin-Ib (1136 aa).

The Myosin motor domain occupies 15 to 701; it reads IGVGDTVLLE…TLFQLEDLRK (687 aa). Residue S60 is modified to Phosphoserine. Position 108 to 115 (108 to 115) interacts with ATP; that stretch reads GESGAGKT. K287 is covalently cross-linked (Glycyl lysine isopeptide (Lys-Gly) (interchain with G-Cter in SUMO1); alternate). Residue K287 forms a Glycyl lysine isopeptide (Lys-Gly) (interchain with G-Cter in SUMO2); alternate linkage. Residues 592 to 599 are actin-binding; it reads YIRCIKPN. IQ domains follow at residues 704–729, 730–750, 750–778, 780–807, 808–837, and 837–866; these read LEDLATLIQKIYRGWKCRTHFLLMKR, SQVVIAAWYRRYAQQKRYQQI, IKSSALVIQSYIRGWKARKILRELKHQKR, KEAATTIAAYWHGTQARKERRRLKDEAR, NKHAIAVIWAFWLGSKARRELKRLKEEARR, and RKHAVAVIWAYWLGLKVRREYRKFFRANAG. Residues 952-1136 enclose the TH1 domain; that stretch reads KALYPSSVGQ…NNRLLEVAVP (185 aa).

It belongs to the TRAFAC class myosin-kinesin ATPase superfamily. Myosin family.

In terms of biological role, motor protein that may participate in process critical to neuronal development and function such as cell migration, neurite outgrowth and vesicular transport. This chain is Unconventional myosin-Ib (Myo1b), found in Rattus norvegicus (Rat).